A 1398-amino-acid chain; its full sequence is DNA-directed RNA polymerase subunit beta' (1398 aa).

Zn(2+) is bound by residues cysteine 71, cysteine 73, cysteine 86, and cysteine 89. Mg(2+)-binding residues include aspartate 462, aspartate 464, and aspartate 466. Positions 810, 884, 891, and 894 each coordinate Zn(2+).

This sequence belongs to the RNA polymerase beta' chain family. As to quaternary structure, the RNAP catalytic core consists of 2 alpha, 1 beta, 1 beta' and 1 omega subunit. When a sigma factor is associated with the core the holoenzyme is formed, which can initiate transcription. It depends on Mg(2+) as a cofactor. Requires Zn(2+) as cofactor.

It carries out the reaction RNA(n) + a ribonucleoside 5'-triphosphate = RNA(n+1) + diphosphate. In terms of biological role, DNA-dependent RNA polymerase catalyzes the transcription of DNA into RNA using the four ribonucleoside triphosphates as substrates. The chain is DNA-directed RNA polymerase subunit beta' from Mesorhizobium japonicum (strain LMG 29417 / CECT 9101 / MAFF 303099) (Mesorhizobium loti (strain MAFF 303099)).